A 387-amino-acid chain; its full sequence is Xylose isomerase (387 aa).

Catalysis depends on residues H54 and D57. Mg(2+) is bound by residues E181, E217, H220, D245, D255, D257, and D287.

It belongs to the xylose isomerase family. In terms of assembly, homotetramer. Mg(2+) serves as cofactor.

The protein resides in the cytoplasm. It carries out the reaction alpha-D-xylose = alpha-D-xylulofuranose. This Streptomyces coelicolor (strain ATCC BAA-471 / A3(2) / M145) protein is Xylose isomerase.